The sequence spans 278 residues: Probable endonuclease 4 (278 aa).

Zn(2+) is bound by residues H66, H106, E142, D176, H179, H213, D226, H228, and E258.

This sequence belongs to the AP endonuclease 2 family. It depends on Zn(2+) as a cofactor.

The catalysed reaction is Endonucleolytic cleavage to 5'-phosphooligonucleotide end-products.. In terms of biological role, endonuclease IV plays a role in DNA repair. It cleaves phosphodiester bonds at apurinic or apyrimidinic (AP) sites, generating a 3'-hydroxyl group and a 5'-terminal sugar phosphate. The chain is Probable endonuclease 4 from Halothermothrix orenii (strain H 168 / OCM 544 / DSM 9562).